The chain runs to 448 residues: MGEAAYVTVSALTKYIKRKFDVDPHLENIWIKGELSNVKIHTRGHIYFTLKDENARMQSVMFARQSERLPFKPENGMKVLVRGGISVYEPSGNYQLYAKEMQPDGVGALYLAYEELKKKLAGEGLFDDRYKKQIPAFPATIGVVTSPTGAAVRDVITTLKRRYPLVKVIVLPALVQGENASRSIVTRIEEANEKEICDVLIVGRGGGSIEELWAFNEEIVARAIFASNIPIISAVGHETDFTISDFVADIRAATPTGAAEIAVPHTTDLIERTKTAEVRMTRAMQQHLGQKKERIQTLQSSYAFRFPKRLYAQKEQQFDLAYQQFQAQLTALLDRKSRQLERETYRLEALHPHEQLKQARTRYQEQTNQLRKNMNIQMKQLHSQFQTVLGKLNALSPLQVMERGYSLAYKEDKLIKSVSQIEEQDRLEIKLKDGVLTCEVLEKRGEEK.

It belongs to the XseA family. As to quaternary structure, heterooligomer composed of large and small subunits.

It is found in the cytoplasm. The protein resides in the nucleoid. The enzyme catalyses Exonucleolytic cleavage in either 5'- to 3'- or 3'- to 5'-direction to yield nucleoside 5'-phosphates.. Its function is as follows. Bidirectionally degrades single-stranded DNA into large acid-insoluble oligonucleotides, which are then degraded further into small acid-soluble oligonucleotides. This chain is Exodeoxyribonuclease 7 large subunit, found in Bacillus subtilis (strain 168).